Consider the following 593-residue polypeptide: Copine-5 (593 aa).

The 133-residue stretch at 2-134 (EQPEDMASLS…SSGSRLEKPL (133 aa)) folds into the C2 1 domain. Serine 19 carries the post-translational modification Phosphoserine. Ca(2+) contacts are provided by aspartate 38, aspartate 44, aspartate 98, aspartate 100, serine 103, lysine 108, and aspartate 110. Phosphoserine is present on serine 103. Serine 140 is subject to Phosphoserine. Residues 161 to 284 (KCGTIILSAE…ARGQSQFNIY (124 aa)) form the C2 2 domain. The Ca(2+) site is built by aspartate 192, aspartate 198, aspartate 254, aspartate 256, and aspartate 262. In terms of domain architecture, VWFA spans 328 to 554 (NFTVAIDFTA…DVLAEIPDQL (227 aa)). The segment at 562–593 (GIRPRPPPAAPAQSPPQSPAHSPPGSPVHTHI) is disordered. The segment covering 565–587 (PRPPPAAPAQSPPQSPAHSPPGS) has biased composition (pro residues).

It belongs to the copine family. Ca(2+) is required as a cofactor. As to expression, expressed in the cerebra and cerebellum of newborn brain. Expressed in the eye, lung and muscles but weakly expressed in the adult brain (at protein level).

It localises to the perikaryon. The protein localises to the cell projection. Functionally, probable calcium-dependent phospholipid-binding protein that may play a role in calcium-mediated intracellular processes. Plays a role in dendrite formation by melanocytes. This chain is Copine-5, found in Mus musculus (Mouse).